The chain runs to 126 residues: DNA-directed RNA polymerase subunit omega (126 aa).

It belongs to the RNA polymerase subunit omega family. The RNAP catalytic core consists of 2 alpha, 1 beta, 1 beta' and 1 omega subunit. When a sigma factor is associated with the core the holoenzyme is formed, which can initiate transcription.

It carries out the reaction RNA(n) + a ribonucleoside 5'-triphosphate = RNA(n+1) + diphosphate. In terms of biological role, promotes RNA polymerase assembly. Latches the N- and C-terminal regions of the beta' subunit thereby facilitating its interaction with the beta and alpha subunits. This is DNA-directed RNA polymerase subunit omega from Paramagnetospirillum magneticum (strain ATCC 700264 / AMB-1) (Magnetospirillum magneticum).